Consider the following 660-residue polypeptide: MSSKVQQEIADLKKLIRKWDKEYYVDSLPSVEDFVYDKHILRLQELESKYPEYKTLDSPTLKFGSDLLNDFKEVEHSAPILSLDKVYDLDLLKSWIDKIDFNNSFNISVEPKIDGCSIVLYYKDGVLEKALTRGNGKFGNDVTINVRTIRYIPLFLDEKVDLVLRGEVYITKENFLKINKFLEKPYTNSRNLASGILRRVDSREVANFPLNIFIYDFLNAGLEFKTNDLATARLKKLGFKVNPLIRFFDLKNSIGEVLNYIADIIKKRDSFEYEIDGVVLKVSDFALRERLGYTAHHPKWAMAYKFEALSDFSRVNSIVVQVGRSGKITPVANIDKVFVSGAFITSATLHNQDYIRSIGLNVGDVVKVSRRGDVIPAVEMVINKFSTGFFKVPDNCPACKTAVVKEGAHFFCPNNNCPSVAVERIKYFCSKNCMDIEGFSDKIISFLFEKKFIFSEIDLYTFDFYKLLEFKGFKDRKINNLINSIEASKKKPFSKLLLSMGIKDLGENTIMLLFLNNLNSFSKLFKLCQDRYFAFSTLLKIKGIGEKIALNIIEAFNDSVMLNKFKFFENLEFKMEEVVAIDGENKLLAGKKFCITGTFNGYSRSIVIDKLKNKGAIFNTCVTGSLDFLIVGEKAGSKLKKALSLNIKIMSFEDIKSYLD.

NAD(+) contacts are provided by residues 33 to 37 (DFVYD), 82 to 83 (SL), and glutamate 110. Lysine 112 acts as the N6-AMP-lysine intermediate in catalysis. The NAD(+) site is built by arginine 133, glutamate 167, lysine 281, and lysine 305. Residues cysteine 396, cysteine 399, cysteine 412, and cysteine 417 each coordinate Zn(2+). The BRCT domain maps to 583–660 (GENKLLAGKK…SFEDIKSYLD (78 aa)).

It belongs to the NAD-dependent DNA ligase family. LigA subfamily. Mg(2+) serves as cofactor. It depends on Mn(2+) as a cofactor.

The catalysed reaction is NAD(+) + (deoxyribonucleotide)n-3'-hydroxyl + 5'-phospho-(deoxyribonucleotide)m = (deoxyribonucleotide)n+m + AMP + beta-nicotinamide D-nucleotide.. In terms of biological role, DNA ligase that catalyzes the formation of phosphodiester linkages between 5'-phosphoryl and 3'-hydroxyl groups in double-stranded DNA using NAD as a coenzyme and as the energy source for the reaction. It is essential for DNA replication and repair of damaged DNA. This chain is DNA ligase, found in Borreliella burgdorferi (strain ZS7) (Borrelia burgdorferi).